A 988-amino-acid polypeptide reads, in one-letter code: DNA-binding protein SMUBP-2 (988 aa).

Alanine 2 carries the post-translational modification N-acetylalanine. ATP is bound by residues 213–220, glutamine 402, tyrosine 441, and glutamate 570; that span reads GPPGTGKT. Positions 637–783 are SS DNA-binding; that stretch reads TAFEYLDDIV…KARHITVSRR (147 aa). Disordered stretches follow at residues 651–722, 765–820, and 835–872; these read THEG…GGTD, LKHD…PHGS, and RQQGCQAQSQLGGGSRPQKAPQKKKKKEPKGPAMALPS. Residues 702–718 are compositionally biased toward polar residues; the sequence is SQVQPQHSSKANGSDRT. An R3H domain is found at 721–784; the sequence is TDRTEHFRAM…ARHITVSRRS (64 aa). The span at 765 to 775 shows a compositional bias: basic and acidic residues; sequence LKHDSTGEGKA. Residues serine 797 and serine 800 each carry the phosphoserine modification. The span at 802–817 shows a compositional bias: low complexity; that stretch reads AQAEPEPQVEQPVGQP. Positions 835–844 are enriched in polar residues; it reads RQQGCQAQSQ. Positions 857–861 match the Nuclear localization signal motif; the sequence is KKKKK. Residues 884–933 form an AN1-type zinc finger; sequence VKADNTCSFTKCSASTTTLGQFCMHCSRRYCLSHHLPEIHGCGEKARAHA. Residues cysteine 890, cysteine 895, cysteine 906, cysteine 909, cysteine 914, histidine 917, histidine 923, and cysteine 925 each coordinate Zn(2+). The segment at 943-988 is disordered; it reads LYAGSGTKDRALDPAKRAQLQRKLDKKLGELSSQRTSKKKEKERGT. The span at 949-971 shows a compositional bias: basic and acidic residues; it reads TKDRALDPAKRAQLQRKLDKKLG. The stretch at 957 to 986 forms a coiled coil; it reads AKRAQLQRKLDKKLGELSSQRTSKKKEKER.

This sequence belongs to the DNA2/NAM7 helicase family. Homooligomer. Interacts with RUVBL1. Interacts with RUVBL2. Interacts with GTF3C1. Interacts with ABT1. Interacts with ribosomes. In terms of tissue distribution, expressed in liver, skin, muscle, heart, brain, spleen and kidney.

The protein resides in the nucleus. It is found in the cytoplasm. It localises to the cell projection. The protein localises to the axon. The enzyme catalyses ATP + H2O = ADP + phosphate + H(+). In terms of biological role, 5' to 3' helicase that unwinds RNA and DNA duplexes in an ATP-dependent reaction. Specific to 5'-phosphorylated single-stranded guanine-rich sequences. May play a role in RNA metabolism, ribosome biogenesis or initiation of translation. May play a role in regulation of transcription. Interacts with tRNA-Tyr. In Rattus norvegicus (Rat), this protein is DNA-binding protein SMUBP-2 (Ighmbp2).